A 252-amino-acid chain; its full sequence is Imidazole glycerol phosphate synthase subunit HisF (252 aa).

Active-site residues include Asp11 and Asp130.

This sequence belongs to the HisA/HisF family. Heterodimer of HisH and HisF.

Its subcellular location is the cytoplasm. It carries out the reaction 5-[(5-phospho-1-deoxy-D-ribulos-1-ylimino)methylamino]-1-(5-phospho-beta-D-ribosyl)imidazole-4-carboxamide + L-glutamine = D-erythro-1-(imidazol-4-yl)glycerol 3-phosphate + 5-amino-1-(5-phospho-beta-D-ribosyl)imidazole-4-carboxamide + L-glutamate + H(+). The protein operates within amino-acid biosynthesis; L-histidine biosynthesis; L-histidine from 5-phospho-alpha-D-ribose 1-diphosphate: step 5/9. In terms of biological role, IGPS catalyzes the conversion of PRFAR and glutamine to IGP, AICAR and glutamate. The HisF subunit catalyzes the cyclization activity that produces IGP and AICAR from PRFAR using the ammonia provided by the HisH subunit. The sequence is that of Imidazole glycerol phosphate synthase subunit HisF from Bacillus cereus (strain G9842).